Consider the following 386-residue polypeptide: Methionine aminopeptidase 1 (386 aa).

Ala2 bears the N-acetylalanine mark. The C6H2-type zinc-finger motif lies at 6–59; that stretch reads TRVCETDGCSSEAKLQCPTCIKLGIQGSYFCSQECFKGSWATHKLLHKKAKDEK. Zn(2+) is bound by residues Cys9, Cys14, Cys22, Cys25, Cys36, Cys40, His48, and His52. An a protein-binding site is contributed by His203. Residues Asp220, Asp231, and His294 each coordinate Zn(2+). His301 lines the a protein pocket. Zn(2+) is bound by residues Glu327 and Glu358.

The protein belongs to the peptidase M24A family. Methionine aminopeptidase type 1 subfamily. In terms of assembly, associates with the 60S ribosomal subunit of the 80S translational complex. Zn(2+) serves as cofactor. The cofactor is Co(2+). Mn(2+) is required as a cofactor. Requires Fe(2+) as cofactor.

It is found in the cytoplasm. The catalysed reaction is Release of N-terminal amino acids, preferentially methionine, from peptides and arylamides.. Functionally, cotranslationally removes the N-terminal methionine from nascent proteins. The N-terminal methionine is often cleaved when the second residue in the primary sequence is small and uncharged (Met-Ala-, Cys, Gly, Pro, Ser, Thr, or Val). The protein is Methionine aminopeptidase 1 (METAP1) of Pongo abelii (Sumatran orangutan).